We begin with the raw amino-acid sequence, 339 residues long: Ketol-acid reductoisomerase (NADP(+)) (339 aa).

Positions 1 to 182 constitute a KARI N-terminal Rossmann domain; the sequence is MRVYYDRDAD…GGGRAGIIET (182 aa). NADP(+)-binding positions include 24 to 27, arginine 48, serine 51, serine 53, and 83 to 86; these read YGSQ and DELQ. Histidine 108 is an active-site residue. Glycine 134 contacts NADP(+). A KARI C-terminal knotted domain is found at 183 to 328; that stretch reads TFREECETDL…ARLRDMMPWI (146 aa). Aspartate 191, glutamate 195, glutamate 227, and glutamate 231 together coordinate Mg(2+). Serine 252 is a binding site for substrate.

Belongs to the ketol-acid reductoisomerase family. It depends on Mg(2+) as a cofactor.

The catalysed reaction is (2R)-2,3-dihydroxy-3-methylbutanoate + NADP(+) = (2S)-2-acetolactate + NADPH + H(+). It catalyses the reaction (2R,3R)-2,3-dihydroxy-3-methylpentanoate + NADP(+) = (S)-2-ethyl-2-hydroxy-3-oxobutanoate + NADPH + H(+). It participates in amino-acid biosynthesis; L-isoleucine biosynthesis; L-isoleucine from 2-oxobutanoate: step 2/4. It functions in the pathway amino-acid biosynthesis; L-valine biosynthesis; L-valine from pyruvate: step 2/4. Involved in the biosynthesis of branched-chain amino acids (BCAA). Catalyzes an alkyl-migration followed by a ketol-acid reduction of (S)-2-acetolactate (S2AL) to yield (R)-2,3-dihydroxy-isovalerate. In the isomerase reaction, S2AL is rearranged via a Mg-dependent methyl migration to produce 3-hydroxy-3-methyl-2-ketobutyrate (HMKB). In the reductase reaction, this 2-ketoacid undergoes a metal-dependent reduction by NADPH to yield (R)-2,3-dihydroxy-isovalerate. This chain is Ketol-acid reductoisomerase (NADP(+)), found in Nitrobacter winogradskyi (strain ATCC 25391 / DSM 10237 / CIP 104748 / NCIMB 11846 / Nb-255).